The chain runs to 201 residues: Imidazoleglycerol-phosphate dehydratase (201 aa).

It belongs to the imidazoleglycerol-phosphate dehydratase family.

Its subcellular location is the cytoplasm. The catalysed reaction is D-erythro-1-(imidazol-4-yl)glycerol 3-phosphate = 3-(imidazol-4-yl)-2-oxopropyl phosphate + H2O. Its pathway is amino-acid biosynthesis; L-histidine biosynthesis; L-histidine from 5-phospho-alpha-D-ribose 1-diphosphate: step 6/9. In Prochlorococcus marinus (strain AS9601), this protein is Imidazoleglycerol-phosphate dehydratase.